A 782-amino-acid polypeptide reads, in one-letter code: Endonuclease MutS2 (782 aa).

Gly336–Thr343 serves as a coordination point for ATP. Positions Leu707 to Lys782 constitute a Smr domain.

It belongs to the DNA mismatch repair MutS family. MutS2 subfamily. As to quaternary structure, homodimer. Binds to stalled ribosomes, contacting rRNA.

Endonuclease that is involved in the suppression of homologous recombination and thus may have a key role in the control of bacterial genetic diversity. Its function is as follows. Acts as a ribosome collision sensor, splitting the ribosome into its 2 subunits. Detects stalled/collided 70S ribosomes which it binds and splits by an ATP-hydrolysis driven conformational change. Acts upstream of the ribosome quality control system (RQC), a ribosome-associated complex that mediates the extraction of incompletely synthesized nascent chains from stalled ribosomes and their subsequent degradation. Probably generates substrates for RQC. The polypeptide is Endonuclease MutS2 (Staphylococcus aureus (strain bovine RF122 / ET3-1)).